Here is a 153-residue protein sequence, read N- to C-terminus: Histone H2B.8 (153 aa).

Basic and acidic residues-rich tracts occupy residues 1–28 (MAPK…EKAP) and 36–53 (EKRL…EGKK). Positions 1-61 (MAPKAEKKPA…KKAGRKKAKK (61 aa)) are disordered. N6-acetyllysine occurs at positions 7 and 37. A Glycyl lysine isopeptide (Lys-Gly) (interchain with G-Cter in ubiquitin) cross-link involves residue Lys-149.

The protein belongs to the histone H2B family. In terms of assembly, the nucleosome is a histone octamer containing two molecules each of H2A, H2B, H3 and H4 assembled in one H3-H4 heterotetramer and two H2A-H2B heterodimers. The octamer wraps approximately 147 bp of DNA. Can be acetylated to form H2BK6ac and H2BK33ac. In terms of processing, monoubiquitinated by BRE1 to form H2BK143ub1 and deubiquitinated by UBP26. Required for heterochromatic histone H3 di- and trimethylation at H3K4me. May give a specific tag for epigenetic transcriptional activation.

It is found in the nucleus. It localises to the chromosome. Functionally, core component of nucleosome. Nucleosomes wrap and compact DNA into chromatin, limiting DNA accessibility to the cellular machineries which require DNA as a template. Histones thereby play a central role in transcription regulation, DNA repair, DNA replication and chromosomal stability. DNA accessibility is regulated via a complex set of post-translational modifications of histones, also called histone code, and nucleosome remodeling. This Oryza sativa subsp. indica (Rice) protein is Histone H2B.8 (H2B.8).